We begin with the raw amino-acid sequence, 806 residues long: Glycerol-3-phosphate acyltransferase (806 aa).

The short motif at 305-310 (CHRSHM) is the HXXXXD motif element.

The protein belongs to the GPAT/DAPAT family.

The protein localises to the cell inner membrane. The catalysed reaction is sn-glycerol 3-phosphate + an acyl-CoA = a 1-acyl-sn-glycero-3-phosphate + CoA. The protein operates within phospholipid metabolism; CDP-diacylglycerol biosynthesis; CDP-diacylglycerol from sn-glycerol 3-phosphate: step 1/3. The sequence is that of Glycerol-3-phosphate acyltransferase from Salmonella arizonae (strain ATCC BAA-731 / CDC346-86 / RSK2980).